Reading from the N-terminus, the 54-residue chain is Large ribosomal subunit protein bL33B (54 aa).

It belongs to the bacterial ribosomal protein bL33 family.

The protein is Large ribosomal subunit protein bL33B of Mycobacterium sp. (strain JLS).